Here is a 388-residue protein sequence, read N- to C-terminus: Alcohol dehydrogenase-like 1 (388 aa).

8 residues coordinate Zn(2+): Cys53, Thr55, His76, Cys106, Cys109, Cys112, Cys120, and Cys185. An alcohol is bound by residues Thr55 and His76. Thr55 contacts NAD(+). NAD(+)-binding positions include Gly210 to Gly215, Asp234, Lys239, Leu304 to Met306, Phe331, and Arg381.

The protein belongs to the zinc-containing alcohol dehydrogenase family. Class-III subfamily. In terms of assembly, homodimer. It depends on Zn(2+) as a cofactor.

Its subcellular location is the cytoplasm. The enzyme catalyses a primary alcohol + NAD(+) = an aldehyde + NADH + H(+). It carries out the reaction a secondary alcohol + NAD(+) = a ketone + NADH + H(+). In Arabidopsis thaliana (Mouse-ear cress), this protein is Alcohol dehydrogenase-like 1.